We begin with the raw amino-acid sequence, 265 residues long: Exosome complex component Rrp4 (265 aa).

Residues 65-137 form the S1 motif domain; sequence GDNVIGKIVD…EVNNIDLTTK (73 aa). The 59-residue stretch at 147 to 205 folds into the KH domain; sequence KGGQIVKITPSRVPRVIGRGGSMINMIKKLTMTRIIVGQNGWIWVSGKNDALEKLAIEA. Residues 241 to 265 are disordered; the sequence is EIPKLEEEPQGEDEVNGNDGEARGA.

The protein belongs to the RRP4 family. Component of the archaeal exosome complex. Forms a trimer of Rrp4 and/or Csl4 subunits. The trimer associates with a hexameric ring-like arrangement composed of 3 Rrp41-Rrp42 heterodimers.

The protein resides in the cytoplasm. Functionally, non-catalytic component of the exosome, which is a complex involved in RNA degradation. Increases the RNA binding and the efficiency of RNA degradation. Confers strong poly(A) specificity to the exosome. The chain is Exosome complex component Rrp4 from Pyrococcus abyssi (strain GE5 / Orsay).